The sequence spans 191 residues: Syndecan-2-A (191 aa).

A signal peptide spans 1 to 22 (MRNVWLIVPFALLAALSGETWA). The Extracellular portion of the chain corresponds to 23-137 (QADRDLYIDS…NLFHRTEVLA (115 aa)). The disordered stretch occupies residues 32–60 (STESSGNYPVDDDDYSSGSGSGIPARGDD). Residues serine 36, serine 48, serine 50, and serine 52 are each glycosylated (O-linked (Xyl...) (glycosaminoglycan) serine). Residues 138–158 (AVIAGGGIGFLFAVFLILLLV) form a helical membrane-spanning segment. The Cytoplasmic portion of the chain corresponds to 159–191 (YRMRKKDEGSYDLGERKPSSAVYQKAPTKEFYA). Residues 168 to 191 (SYDLGERKPSSAVYQKAPTKEFYA) are disordered.

The protein belongs to the syndecan proteoglycan family. Post-translationally, O-glycosylated; contains both heparan sulfate and chondroitin sulfate.

The protein resides in the membrane. Its function is as follows. Cell surface proteoglycan. This is Syndecan-2-A (sdc2-a) from Xenopus laevis (African clawed frog).